Here is a 118-residue protein sequence, read N- to C-terminus: V-type proton ATPase subunit G 2 (118 aa).

Residues 26–90 (RKRKARRLKQ…VQGMQSSQQR (65 aa)) are disordered. Over residues 35–55 (QAKEEAQMEVEQYRREREQEF) the composition is skewed to basic and acidic residues. Composition is skewed to polar residues over residues 56-69 (QSKQ…QGNL) and 78-89 (RRQVQGMQSSQQ).

It belongs to the V-ATPase G subunit family. As to quaternary structure, V-ATPase is a heteromultimeric enzyme made up of two complexes: the ATP-hydrolytic V1 complex and the proton translocation V0 complex. The V1 complex consists of three catalytic AB heterodimers that form a heterohexamer, three peripheral stalks each consisting of EG heterodimers, one central rotor including subunits D and F, and the regulatory subunits C and H. The proton translocation complex V0 consists of the proton transport subunit a, a ring of proteolipid subunits c9c'', rotary subunit d, subunits e and f, and the accessory subunits ATP6AP1/Ac45 and ATP6AP2/PRR.

The protein resides in the melanosome. It localises to the cytoplasmic vesicle. The protein localises to the clathrin-coated vesicle membrane. Its function is as follows. Subunit of the V1 complex of vacuolar(H+)-ATPase (V-ATPase), a multisubunit enzyme composed of a peripheral complex (V1) that hydrolyzes ATP and a membrane integral complex (V0) that translocates protons. V-ATPase is responsible for acidifying and maintaining the pH of intracellular compartments and in some cell types, is targeted to the plasma membrane, where it is responsible for acidifying the extracellular environment. The protein is V-type proton ATPase subunit G 2 (ATP6V1G2) of Sus scrofa (Pig).